The chain runs to 196 residues: Glycerol-3-phosphate acyltransferase (196 aa).

Helical transmembrane passes span 2 to 22 (GWWL…SYLI), 51 to 71 (VVGG…VFIA), 80 to 100 (LVSL…FMKF), 112 to 132 (IIFC…LVIV), and 137 to 156 (YASL…GYLF).

It belongs to the PlsY family. Probably interacts with PlsX.

It localises to the cell inner membrane. It carries out the reaction an acyl phosphate + sn-glycerol 3-phosphate = a 1-acyl-sn-glycero-3-phosphate + phosphate. Its pathway is lipid metabolism; phospholipid metabolism. Catalyzes the transfer of an acyl group from acyl-phosphate (acyl-PO(4)) to glycerol-3-phosphate (G3P) to form lysophosphatidic acid (LPA). This enzyme utilizes acyl-phosphate as fatty acyl donor, but not acyl-CoA or acyl-ACP. In Thermotoga petrophila (strain ATCC BAA-488 / DSM 13995 / JCM 10881 / RKU-1), this protein is Glycerol-3-phosphate acyltransferase.